The sequence spans 565 residues: Proline--tRNA ligase (565 aa).

This sequence belongs to the class-II aminoacyl-tRNA synthetase family. ProS type 1 subfamily. As to quaternary structure, homodimer.

It localises to the cytoplasm. It catalyses the reaction tRNA(Pro) + L-proline + ATP = L-prolyl-tRNA(Pro) + AMP + diphosphate. In terms of biological role, catalyzes the attachment of proline to tRNA(Pro) in a two-step reaction: proline is first activated by ATP to form Pro-AMP and then transferred to the acceptor end of tRNA(Pro). As ProRS can inadvertently accommodate and process non-cognate amino acids such as alanine and cysteine, to avoid such errors it has two additional distinct editing activities against alanine. One activity is designated as 'pretransfer' editing and involves the tRNA(Pro)-independent hydrolysis of activated Ala-AMP. The other activity is designated 'posttransfer' editing and involves deacylation of mischarged Ala-tRNA(Pro). The misacylated Cys-tRNA(Pro) is not edited by ProRS. The protein is Proline--tRNA ligase of Lactobacillus gasseri (strain ATCC 33323 / DSM 20243 / BCRC 14619 / CIP 102991 / JCM 1131 / KCTC 3163 / NCIMB 11718 / NCTC 13722 / AM63).